We begin with the raw amino-acid sequence, 129 residues long: Follitropin subunit beta (129 aa).

The N-terminal stretch at Met1 to Cys18 is a signal peptide. 6 cysteine pairs are disulfide-bonded: Cys21-Cys69, Cys35-Cys84, Cys38-Cys122, Cys46-Cys100, Cys50-Cys102, and Cys105-Cys112. Asn25 and Asn42 each carry an N-linked (GlcNAc...) asparagine glycan.

It belongs to the glycoprotein hormones subunit beta family. Heterodimer. The active follitropin is a heterodimer composed of an alpha chain/CGA shared with other hormones and a unique beta chain/FSHB shown here.

The protein resides in the secreted. In terms of biological role, together with the alpha chain CGA constitutes follitropin, the follicle-stimulating hormone, and provides its biological specificity to the hormone heterodimer. Binds FSHR, a G protein-coupled receptor, on target cells to activate downstream signaling pathways. Follitropin is involved in follicle development and spermatogenesis in reproductive organs. The polypeptide is Follitropin subunit beta (FSHB) (Macaca fascicularis (Crab-eating macaque)).